A 162-amino-acid polypeptide reads, in one-letter code: Transcriptional repressor NrdR (162 aa).

Residues 3–34 fold into a zinc finger; it reads CPFCQFEGLKVTDSRDAMEMNAIRRRRECLNC. The ATP-cone domain maps to 48–138; the sequence is VQVQKRDGTY…VYKRFKDLGE (91 aa).

The protein belongs to the NrdR family. Requires Zn(2+) as cofactor.

Negatively regulates transcription of bacterial ribonucleotide reductase nrd genes and operons by binding to NrdR-boxes. The protein is Transcriptional repressor NrdR of Protochlamydia amoebophila (strain UWE25).